Reading from the N-terminus, the 345-residue chain is Protein RecA (345 aa).

65–72 contacts ATP; that stretch reads GPESSGKT.

The protein belongs to the RecA family.

It is found in the cytoplasm. Its function is as follows. Can catalyze the hydrolysis of ATP in the presence of single-stranded DNA, the ATP-dependent uptake of single-stranded DNA by duplex DNA, and the ATP-dependent hybridization of homologous single-stranded DNAs. It interacts with LexA causing its activation and leading to its autocatalytic cleavage. This is Protein RecA from Colwellia psychrerythraea (strain 34H / ATCC BAA-681) (Vibrio psychroerythus).